Consider the following 106-residue polypeptide: UPF0145 protein CLL_A2504 (106 aa).

This sequence belongs to the UPF0145 family.

The polypeptide is UPF0145 protein CLL_A2504 (Clostridium botulinum (strain Eklund 17B / Type B)).